The chain runs to 734 residues: Ribosomal RNA large subunit methyltransferase K/L (734 aa).

One can recognise a THUMP domain in the interval histidine 49–leucine 167.

Belongs to the methyltransferase superfamily. RlmKL family.

It is found in the cytoplasm. The enzyme catalyses guanosine(2445) in 23S rRNA + S-adenosyl-L-methionine = N(2)-methylguanosine(2445) in 23S rRNA + S-adenosyl-L-homocysteine + H(+). It carries out the reaction guanosine(2069) in 23S rRNA + S-adenosyl-L-methionine = N(2)-methylguanosine(2069) in 23S rRNA + S-adenosyl-L-homocysteine + H(+). Specifically methylates the guanine in position 2445 (m2G2445) and the guanine in position 2069 (m7G2069) of 23S rRNA. The chain is Ribosomal RNA large subunit methyltransferase K/L from Acinetobacter baumannii (strain AYE).